Here is a 247-residue protein sequence, read N- to C-terminus: 2,3-bisphosphoglycerate-dependent phosphoglycerate mutase (247 aa).

Residues 8–15 (RHGESTWN), 21–22 (TG), arginine 60, 87–90 (ERHY), lysine 98, 114–115 (RR), and 183–184 (GN) contribute to the substrate site. The Tele-phosphohistidine intermediate role is filled by histidine 9. Glutamate 87 acts as the Proton donor/acceptor in catalysis.

The protein belongs to the phosphoglycerate mutase family. BPG-dependent PGAM subfamily. In terms of assembly, homodimer.

The catalysed reaction is (2R)-2-phosphoglycerate = (2R)-3-phosphoglycerate. It functions in the pathway carbohydrate degradation; glycolysis; pyruvate from D-glyceraldehyde 3-phosphate: step 3/5. Functionally, catalyzes the interconversion of 2-phosphoglycerate and 3-phosphoglycerate. The sequence is that of 2,3-bisphosphoglycerate-dependent phosphoglycerate mutase from Acidovorax sp. (strain JS42).